The primary structure comprises 476 residues: 3-isopropylmalate dehydratase large subunit (476 aa).

[4Fe-4S] cluster is bound by residues C355, C416, and C419.

This sequence belongs to the aconitase/IPM isomerase family. LeuC type 1 subfamily. In terms of assembly, heterodimer of LeuC and LeuD. [4Fe-4S] cluster serves as cofactor.

It carries out the reaction (2R,3S)-3-isopropylmalate = (2S)-2-isopropylmalate. The protein operates within amino-acid biosynthesis; L-leucine biosynthesis; L-leucine from 3-methyl-2-oxobutanoate: step 2/4. In terms of biological role, catalyzes the isomerization between 2-isopropylmalate and 3-isopropylmalate, via the formation of 2-isopropylmaleate. This is 3-isopropylmalate dehydratase large subunit from Sphingopyxis alaskensis (strain DSM 13593 / LMG 18877 / RB2256) (Sphingomonas alaskensis).